A 278-amino-acid polypeptide reads, in one-letter code: Orotidine 5'-phosphate decarboxylase (278 aa).

Residues aspartate 40, 62–64 (KTH), 93–102 (DRKFIDIGNT), tyrosine 229, and arginine 247 each bind substrate. Lysine 95 (proton donor) is an active-site residue.

The protein belongs to the OMP decarboxylase family.

It catalyses the reaction orotidine 5'-phosphate + H(+) = UMP + CO2. Its pathway is pyrimidine metabolism; UMP biosynthesis via de novo pathway; UMP from orotate: step 2/2. This is Orotidine 5'-phosphate decarboxylase (pyrG) from Aspergillus fumigatus (strain ATCC MYA-4609 / CBS 101355 / FGSC A1100 / Af293) (Neosartorya fumigata).